The primary structure comprises 427 residues: Glutamyl-tRNA reductase (427 aa).

Substrate-binding positions include 48–51 (TCNR), serine 99, 104–106 (EDQ), and glutamine 110. Cysteine 49 functions as the Nucleophile in the catalytic mechanism. 179-184 (GAGEMG) serves as a coordination point for NADP(+).

Belongs to the glutamyl-tRNA reductase family. As to quaternary structure, homodimer.

The enzyme catalyses (S)-4-amino-5-oxopentanoate + tRNA(Glu) + NADP(+) = L-glutamyl-tRNA(Glu) + NADPH + H(+). The protein operates within porphyrin-containing compound metabolism; protoporphyrin-IX biosynthesis; 5-aminolevulinate from L-glutamyl-tRNA(Glu): step 1/2. Functionally, catalyzes the NADPH-dependent reduction of glutamyl-tRNA(Glu) to glutamate 1-semialdehyde (GSA). This is Glutamyl-tRNA reductase from Methanocella arvoryzae (strain DSM 22066 / NBRC 105507 / MRE50).